A 502-amino-acid chain; its full sequence is MPRSSRMNLWPHCFPCFDDGDRSGNRFSTVCNFPDDLLPSLGATAHQPPKLRKYLVSPYDPRYKVWETFLIILVVYSAWICPLEFAFLRYLPSAPFVVDDVVNGFFAVDIMLTFFVPFVDKKSYLLVNDPKKIAVRYLSSWFVFDVCSTVPFHSISLLFNEHGHDLGFKFLNVLRLWRLRRVSSMFARLEKDIRFNYAVIRCTKLISVTLFAIHCAGCINYLIADRYPDPRRTWIGAVMPNFREDGLWIRYVTAMYWSITTLTTTGYGDLHAENAREMLFGICYMLFNLWLTAYLIGNMTNLVVHSTSRTRDFRDVVQAASEFAARNQLPQQIEEQMLNHICLRYKTDGLKQQETLDVLPKAMRSSISHYLFFRVVQGAYLFKGVSSRFIQQLVTEMQAEYFAPKEDIILQNDSPSDLYLLVSGAVDILVFLDGTEQVYRRAAEGELLGEIGVLCNKPQSFTFRTTKLSQILRISRTKLLGIIQENREDGDIIRSNLQQVNV.

Residues 1-67 (MPRSSRMNLW…PYDPRYKVWE (67 aa)) are Cytoplasmic-facing. A helical transmembrane segment spans residues 68–88 (TFLIILVVYSAWICPLEFAFL). Topologically, residues 89–95 (RYLPSAP) are extracellular. The helical transmembrane segment at 96–116 (FVVDDVVNGFFAVDIMLTFFV) threads the bilayer. The Cytoplasmic segment spans residues 117 to 138 (PFVDKKSYLLVNDPKKIAVRYL). Residues 139 to 159 (SSWFVFDVCSTVPFHSISLLF) traverse the membrane as a helical segment. Over 160 to 169 (NEHGHDLGFK) the chain is Extracellular. The helical; Voltage-sensor transmembrane segment at 170-190 (FLNVLRLWRLRRVSSMFARLE) threads the bilayer. The Cytoplasmic portion of the chain corresponds to 191-204 (KDIRFNYAVIRCTK). The chain crosses the membrane as a helical span at residues 205–225 (LISVTLFAIHCAGCINYLIAD). At 226–252 (RYPDPRRTWIGAVMPNFREDGLWIRYV) the chain is on the extracellular side. An intramembrane region (pore-forming) is located at residues 253–272 (TAMYWSITTLTTTGYGDLHA). Topologically, residues 273–276 (ENAR) are extracellular. A helical transmembrane segment spans residues 277–297 (EMLFGICYMLFNLWLTAYLIG). The Cytoplasmic segment spans residues 298–502 (NMTNLVVHST…IRSNLQQVNV (205 aa)). 381–500 (LFKGVSSRFI…DIIRSNLQQV (120 aa)) serves as a coordination point for a nucleoside 3',5'-cyclic phosphate.

It belongs to the potassium channel family. Plant (TC 1.A.1.4) subfamily.

It localises to the membrane. In terms of biological role, probable inward-rectifying potassium channel. Assuming opened or closed conformations in response to the voltage difference across the membrane, the channel is activated by hyperpolarization. The protein is Potassium channel KAT3 of Oryza sativa subsp. japonica (Rice).